Here is a 195-residue protein sequence, read N- to C-terminus: CDP-diacylglycerol--glycerol-3-phosphate 3-phosphatidyltransferase (195 aa).

The next 4 helical transmembrane spans lie at 7-24 (ITVL…LFYL), 60-81 (FGAF…VLLV), 134-150 (MLAL…FTFW), and 157-173 (FLLI…LQYL).

This sequence belongs to the CDP-alcohol phosphatidyltransferase class-I family.

It is found in the cell membrane. The catalysed reaction is a CDP-1,2-diacyl-sn-glycerol + sn-glycerol 3-phosphate = a 1,2-diacyl-sn-glycero-3-phospho-(1'-sn-glycero-3'-phosphate) + CMP + H(+). It participates in phospholipid metabolism; phosphatidylglycerol biosynthesis; phosphatidylglycerol from CDP-diacylglycerol: step 1/2. Functionally, this protein catalyzes the committed step to the synthesis of the acidic phospholipids. The protein is CDP-diacylglycerol--glycerol-3-phosphate 3-phosphatidyltransferase (pgsA) of Pseudomonas fluorescens.